Consider the following 949-residue polypeptide: Glycine dehydrogenase (decarboxylating) (949 aa).

Residue Lys704 is modified to N6-(pyridoxal phosphate)lysine.

Belongs to the GcvP family. The glycine cleavage system is composed of four proteins: P, T, L and H. The cofactor is pyridoxal 5'-phosphate.

The catalysed reaction is N(6)-[(R)-lipoyl]-L-lysyl-[glycine-cleavage complex H protein] + glycine + H(+) = N(6)-[(R)-S(8)-aminomethyldihydrolipoyl]-L-lysyl-[glycine-cleavage complex H protein] + CO2. Functionally, the glycine cleavage system catalyzes the degradation of glycine. The P protein binds the alpha-amino group of glycine through its pyridoxal phosphate cofactor; CO(2) is released and the remaining methylamine moiety is then transferred to the lipoamide cofactor of the H protein. The protein is Glycine dehydrogenase (decarboxylating) of Bacteroides thetaiotaomicron (strain ATCC 29148 / DSM 2079 / JCM 5827 / CCUG 10774 / NCTC 10582 / VPI-5482 / E50).